The sequence spans 327 residues: Phenylalanine--tRNA ligase alpha subunit (327 aa).

Glu-252 contributes to the Mg(2+) binding site.

Belongs to the class-II aminoacyl-tRNA synthetase family. Phe-tRNA synthetase alpha subunit type 1 subfamily. In terms of assembly, tetramer of two alpha and two beta subunits. It depends on Mg(2+) as a cofactor.

It is found in the cytoplasm. The catalysed reaction is tRNA(Phe) + L-phenylalanine + ATP = L-phenylalanyl-tRNA(Phe) + AMP + diphosphate + H(+). The polypeptide is Phenylalanine--tRNA ligase alpha subunit (Salmonella agona (strain SL483)).